A 125-amino-acid polypeptide reads, in one-letter code: MTLLKEFFIVGAGGFVGSVMRYLMAVVLASASLKHGFPYATLAVNVLGSFMIGFLSQPFSANPYGRLFVMVGVLGGFTTFSTFSNETLLLYNNGQFIFASLNVLLNVLLCLVGVFCGFEAAKIIL.

A run of 4 helical transmembrane segments spans residues 7-27, 36-56, 63-83, and 96-116; these read FFIV…MAVV, GFPY…GFLS, PYGR…FSTF, and FIFA…GVFC. Residues glycine 75 and threonine 78 each coordinate Na(+).

This sequence belongs to the fluoride channel Fluc/FEX (TC 1.A.43) family.

The protein localises to the cell inner membrane. The catalysed reaction is fluoride(in) = fluoride(out). Its activity is regulated as follows. Na(+) is not transported, but it plays an essential structural role and its presence is essential for fluoride channel function. In terms of biological role, fluoride-specific ion channel. Important for reducing fluoride concentration in the cell, thus reducing its toxicity. This chain is Fluoride-specific ion channel FluC, found in Elusimicrobium minutum (strain Pei191).